A 576-amino-acid polypeptide reads, in one-letter code: Lysine--tRNA ligase (576 aa).

Residues glutamate 412 and glutamate 419 each coordinate Mg(2+).

This sequence belongs to the class-II aminoacyl-tRNA synthetase family. In terms of assembly, homodimer. Mg(2+) serves as cofactor.

Its subcellular location is the cytoplasm. The enzyme catalyses tRNA(Lys) + L-lysine + ATP = L-lysyl-tRNA(Lys) + AMP + diphosphate. The protein is Lysine--tRNA ligase of Phocaeicola vulgatus (strain ATCC 8482 / DSM 1447 / JCM 5826 / CCUG 4940 / NBRC 14291 / NCTC 11154) (Bacteroides vulgatus).